The chain runs to 424 residues: Kynureninase (424 aa).

Pyridoxal 5'-phosphate-binding positions include leucine 109, threonine 110, 137–140 (FPSD), aspartate 222, histidine 225, and tyrosine 247. Lysine 248 is modified (N6-(pyridoxal phosphate)lysine). 2 residues coordinate pyridoxal 5'-phosphate: tryptophan 278 and asparagine 306.

The protein belongs to the kynureninase family. As to quaternary structure, homodimer. Requires pyridoxal 5'-phosphate as cofactor.

It carries out the reaction L-kynurenine + H2O = anthranilate + L-alanine + H(+). The catalysed reaction is 3-hydroxy-L-kynurenine + H2O = 3-hydroxyanthranilate + L-alanine + H(+). It functions in the pathway amino-acid degradation; L-kynurenine degradation; L-alanine and anthranilate from L-kynurenine: step 1/1. The protein operates within cofactor biosynthesis; NAD(+) biosynthesis; quinolinate from L-kynurenine: step 2/3. Functionally, catalyzes the cleavage of L-kynurenine (L-Kyn) and L-3-hydroxykynurenine (L-3OHKyn) into anthranilic acid (AA) and 3-hydroxyanthranilic acid (3-OHAA), respectively. This is Kynureninase from Koribacter versatilis (strain Ellin345).